The following is a 320-amino-acid chain: Rhomboid-like protein 17, chloroplastic (320 aa).

Residues 1–87 (MHAIFSSFSR…LKFGNVMESR (87 aa)) constitute a chloroplast transit peptide. A run of 5 helical transmembrane segments spans residues 116-136 (WING…AVFT), 160-180 (LITS…MIGI), 199-219 (LYFA…ALLA), 247-267 (MFAI…YFAL), and 295-315 (IASS…WARI).

The protein belongs to the peptidase S54 family.

Its subcellular location is the plastid. The protein localises to the chloroplast membrane. In terms of biological role, probable rhomboid-type serine protease that catalyzes intramembrane proteolysis. The polypeptide is Rhomboid-like protein 17, chloroplastic (Arabidopsis thaliana (Mouse-ear cress)).